The primary structure comprises 324 residues: Ferrochelatase (324 aa).

2 residues coordinate Fe cation: His197 and Glu278.

This sequence belongs to the ferrochelatase family.

It localises to the cytoplasm. The enzyme catalyses heme b + 2 H(+) = protoporphyrin IX + Fe(2+). The protein operates within porphyrin-containing compound metabolism; protoheme biosynthesis; protoheme from protoporphyrin-IX: step 1/1. In terms of biological role, catalyzes the ferrous insertion into protoporphyrin IX. This Aeromonas hydrophila subsp. hydrophila (strain ATCC 7966 / DSM 30187 / BCRC 13018 / CCUG 14551 / JCM 1027 / KCTC 2358 / NCIMB 9240 / NCTC 8049) protein is Ferrochelatase.